The primary structure comprises 219 residues: Inner membrane protein YghB (219 aa).

The Cytoplasmic segment spans residues 1 to 17; that stretch reads MAVIQDIIAALWQHDFA. Residues 18–38 form a helical membrane-spanning segment; it reads ALANPHVVSVVYFVMFATLFL. At 39–67 the chain is on the periplasmic side; the sequence is ENGLLPASFLPGDSLLLLAGALIAQDVMH. The chain crosses the membrane as a helical span at residues 68–88; sequence FLPTIGILTAAASLGCWLSYI. Topologically, residues 89–160 are cytoplasmic; it reads QGRWLGNTRT…RRFQFFNWLS (72 aa). The helical transmembrane segment at 161–181 threads the bilayer; sequence GLLWVTVVTSFGYALSMIPFV. Topologically, residues 182–191 are periplasmic; the sequence is KRHEDQVMTF. The helical transmembrane segment at 192-212 threads the bilayer; it reads LMILPVALLVAGLLGTLVVVI. Residues 213 to 219 lie on the Cytoplasmic side of the membrane; sequence KKKYCNA.

It belongs to the DedA family.

Its subcellular location is the cell inner membrane. The protein is Inner membrane protein YghB (yghB) of Salmonella typhimurium (strain LT2 / SGSC1412 / ATCC 700720).